Reading from the N-terminus, the 84-residue chain is MPDVFTHPDKTLDTQGLRCPEPVMMVRKTVRHMEAGQMLLILADDPATTRDIPSFCRFMEHQLVAQETEQMPYRYLVRKKESQL.

Cys19 functions as the Cysteine persulfide intermediate in the catalytic mechanism.

It belongs to the sulfur carrier protein TusA family. As to quaternary structure, interacts with IscS.

The protein resides in the cytoplasm. It participates in tRNA modification. Its function is as follows. Sulfur carrier protein involved in sulfur trafficking in the cell. Part of a sulfur-relay system required for 2-thiolation during synthesis of 2-thiouridine of the modified wobble base 5-methylaminomethyl-2-thiouridine (mnm(5)s(2)U) in tRNA. Interacts with IscS and stimulates its cysteine desulfurase activity. Accepts an activated sulfur from IscS, which is then transferred to TusD, and thus determines the direction of sulfur flow from IscS to 2-thiouridine formation. Also appears to be involved in sulfur transfer for the biosynthesis of molybdopterin. The sequence is that of Sulfur carrier protein TusA from Photorhabdus laumondii subsp. laumondii (strain DSM 15139 / CIP 105565 / TT01) (Photorhabdus luminescens subsp. laumondii).